The following is a 426-amino-acid chain: Serine hydroxymethyltransferase 1 (426 aa).

(6S)-5,6,7,8-tetrahydrofolate is bound by residues Leu-121 and 125 to 127 (GHL). Lys-230 carries the post-translational modification N6-(pyridoxal phosphate)lysine. 355 to 357 (SPF) is a binding site for (6S)-5,6,7,8-tetrahydrofolate.

This sequence belongs to the SHMT family. As to quaternary structure, homodimer. Pyridoxal 5'-phosphate serves as cofactor.

Its subcellular location is the cytoplasm. It catalyses the reaction (6R)-5,10-methylene-5,6,7,8-tetrahydrofolate + glycine + H2O = (6S)-5,6,7,8-tetrahydrofolate + L-serine. The protein operates within one-carbon metabolism; tetrahydrofolate interconversion. It participates in amino-acid biosynthesis; glycine biosynthesis; glycine from L-serine: step 1/1. Functionally, catalyzes the reversible interconversion of serine and glycine with tetrahydrofolate (THF) serving as the one-carbon carrier. This reaction serves as the major source of one-carbon groups required for the biosynthesis of purines, thymidylate, methionine, and other important biomolecules. Also exhibits THF-independent aldolase activity toward beta-hydroxyamino acids, producing glycine and aldehydes, via a retro-aldol mechanism. In Hahella chejuensis (strain KCTC 2396), this protein is Serine hydroxymethyltransferase 1.